Reading from the N-terminus, the 415-residue chain is von Willebrand factor A domain-containing protein 1 (415 aa).

The N-terminal stretch at M1–A18 is a signal peptide. The region spanning D34–I209 is the VWFA domain. Phosphoserine is present on residues S74, S80, and S93. Fibronectin type-III domains lie at Q214–E305 and G307–P403. N-linked (GlcNAc...) asparagine glycosylation is present at N264. A disulfide bridge links C369 with C393. The tract at residues K391–P415 is disordered.

In terms of assembly, homodimer or homomultimer; disulfide-linked. Interacts with HSPG2. In terms of processing, N-glycosylated. In terms of tissue distribution, expressed at high levels in the chondrocytes. Detected in the vasculature of neural tissues, in basement membrane structures of the peripheral nervous system, in the apical ectodermal ridge of developing limb buds, and in skeletal and cardiac muscle (at protein level).

The protein resides in the secreted. It is found in the extracellular space. The protein localises to the extracellular matrix. It localises to the basement membrane. Functionally, promotes matrix assembly. Involved in the organization of skeletal muscles and in the formation of neuromuscular junctions. The chain is von Willebrand factor A domain-containing protein 1 (Vwa1) from Mus musculus (Mouse).